Here is a 167-residue protein sequence, read N- to C-terminus: Ribosome maturation factor RimM (167 aa).

Positions 94–166 (TGRAYLHELI…YMVVPRFDEF (73 aa)) constitute a PRC barrel domain.

Belongs to the RimM family. Binds ribosomal protein uS19.

Its subcellular location is the cytoplasm. An accessory protein needed during the final step in the assembly of 30S ribosomal subunit, possibly for assembly of the head region. Essential for efficient processing of 16S rRNA. May be needed both before and after RbfA during the maturation of 16S rRNA. It has affinity for free ribosomal 30S subunits but not for 70S ribosomes. The chain is Ribosome maturation factor RimM from Chlorobium phaeobacteroides (strain DSM 266 / SMG 266 / 2430).